An 82-amino-acid polypeptide reads, in one-letter code: Small ribosomal subunit protein uS17 (82 aa).

It belongs to the universal ribosomal protein uS17 family. In terms of assembly, part of the 30S ribosomal subunit.

Functionally, one of the primary rRNA binding proteins, it binds specifically to the 5'-end of 16S ribosomal RNA. In Shewanella woodyi (strain ATCC 51908 / MS32), this protein is Small ribosomal subunit protein uS17.